A 141-amino-acid polypeptide reads, in one-letter code: Large ribosomal subunit protein uL11 (141 aa).

Belongs to the universal ribosomal protein uL11 family. In terms of assembly, part of the ribosomal stalk of the 50S ribosomal subunit. Interacts with L10 and the large rRNA to form the base of the stalk. L10 forms an elongated spine to which L12 dimers bind in a sequential fashion forming a multimeric L10(L12)X complex. In terms of processing, one or more lysine residues are methylated.

Functionally, forms part of the ribosomal stalk which helps the ribosome interact with GTP-bound translation factors. In Streptococcus suis (strain 05ZYH33), this protein is Large ribosomal subunit protein uL11.